A 122-amino-acid chain; its full sequence is Large ribosomal subunit protein uL14 (122 aa).

This sequence belongs to the universal ribosomal protein uL14 family. In terms of assembly, part of the 50S ribosomal subunit. Forms a cluster with proteins L3 and L19. In the 70S ribosome, L14 and L19 interact and together make contacts with the 16S rRNA in bridges B5 and B8.

Binds to 23S rRNA. Forms part of two intersubunit bridges in the 70S ribosome. This Campylobacter jejuni subsp. jejuni serotype O:6 (strain 81116 / NCTC 11828) protein is Large ribosomal subunit protein uL14.